The chain runs to 234 residues: Probable transcriptional regulatory protein TcrX (234 aa).

The region spanning 10-124 is the Response regulatory domain; that stretch reads TVLVVDDEPV…EVVLRLRALL (115 aa). 4-aspartylphosphate is present on Asp59. Residues 135 to 232 constitute a DNA-binding region (ompR/PhoB-type); the sequence is GAQLVVGDLV…LRGAGYVLKP (98 aa).

Post-translationally, phosphorylated by TcrY.

It localises to the cytoplasm. Functionally, member of the two-component regulatory system TcrY/TcrX. In Mycobacterium tuberculosis (strain ATCC 25618 / H37Rv), this protein is Probable transcriptional regulatory protein TcrX (tcrX).